Reading from the N-terminus, the 267-residue chain is 4-hydroxy-tetrahydrodipicolinate reductase (267 aa).

Residue 11–16 (GAAGRM) coordinates NAD(+). Arg-39 contacts NADP(+). NAD(+) contacts are provided by residues 100–102 (GTT) and 126–129 (APNF). His-156 functions as the Proton donor/acceptor in the catalytic mechanism. (S)-2,3,4,5-tetrahydrodipicolinate is bound at residue His-157. Lys-160 (proton donor) is an active-site residue. 166 to 167 (GT) is a (S)-2,3,4,5-tetrahydrodipicolinate binding site.

This sequence belongs to the DapB family.

It localises to the cytoplasm. It carries out the reaction (S)-2,3,4,5-tetrahydrodipicolinate + NAD(+) + H2O = (2S,4S)-4-hydroxy-2,3,4,5-tetrahydrodipicolinate + NADH + H(+). It catalyses the reaction (S)-2,3,4,5-tetrahydrodipicolinate + NADP(+) + H2O = (2S,4S)-4-hydroxy-2,3,4,5-tetrahydrodipicolinate + NADPH + H(+). It functions in the pathway amino-acid biosynthesis; L-lysine biosynthesis via DAP pathway; (S)-tetrahydrodipicolinate from L-aspartate: step 4/4. Catalyzes the conversion of 4-hydroxy-tetrahydrodipicolinate (HTPA) to tetrahydrodipicolinate. The protein is 4-hydroxy-tetrahydrodipicolinate reductase of Moorella thermoacetica (strain ATCC 39073 / JCM 9320).